The chain runs to 754 residues: MGLSDIPANYMQGSHPHLTLHPQQQHHQNQQHLQHLQQMQQLHNAMPTPAQQAAQVLAMESNELLMSTKDKLSSKKKMHLLKKIKKRFGLVRRSPSSCPGPNNLPPLQFHSVHGDNIRISRDGTLARRFESFCRAITFSARPVRINERICVKFAEISNNWNGGIRFGFTSNDPVTLEGTLPKYACPDLTNRPGFWAKALHEQYCEKDNILYYYVNGAGDVIYGINNEEKGVILTGIDTRSLLWTVIDIYGNCTGIEFLDSRIYMYQQQPAAIPMATVPAQQQQMPQPAANASSALNSHHPHQQSRRSLPGHTAAIEHDLERHVMPSLQSLHLAGNGGSVASVEQAAIAHDLANGLPPLRYNANGRLIPVPFHNTKGRNVRLSQDRFVASRTESDFCQGYVFTARPIRIGEKLIVQVLKTEQMYVGALALGLTSCNPAMLQPNDLPNDSDFLLDRPEYWVVSKDIAAAPQRGDEIAFFVAPNGEVSISKNNGPAVVVMHVDQSLQLWAFLDVYGSTQSLRMFRQQLPNMVAYPSQPQVNVNASSSSACNAASTSRMLPMTESMSSLNAGATAKLLHHPSQLSVAQSTSTLASAGGVNGSRMISMPSNGDILQIQPNGGGTVLVVNLPPASSSHDINGQLAARPTATVTSSGVLAGACSSGTLISTTSSQYIEQPIANSTNNAANKWKDSLSDQQSTDSSAECTICYENPIDSVLYMCGHMCMCYDCAIEQWRGVGGGQCPLCRAVIRDVIRTYTT.

One can recognise an NHR 1 domain in the interval 106 to 260; the sequence is PLQFHSVHGD…NCTGIEFLDS (155 aa). The segment covering 280-297 has biased composition (low complexity); the sequence is QQQQMPQPAANASSALNS. The segment at 280–308 is disordered; the sequence is QQQQMPQPAANASSALNSHHPHQQSRRSL. Residues Ser338 and Ser341 each carry the phosphoserine modification. One can recognise an NHR 2 domain in the interval 368–523; that stretch reads PVPFHNTKGR…STQSLRMFRQ (156 aa). The RING-type zinc finger occupies 701-742; the sequence is CTICYENPIDSVLYMCGHMCMCYDCAIEQWRGVGGGQCPLCR.

Its subcellular location is the nucleus. Its function is as follows. Involved in neurogenesis. Interacts with other neurogenic proteins in the specification of the neuroblast versus epidermoblast cell fate. The polypeptide is Protein neuralized (neur) (Drosophila melanogaster (Fruit fly)).